We begin with the raw amino-acid sequence, 573 residues long: Trehalose synthase (573 aa).

Asp70 is a substrate binding site. Asn112 serves as a coordination point for Ca(2+). Substrate contacts are provided by His113 and Gln178. Asp180 is a Ca(2+) binding site. Arg208 is a substrate binding site. Asp210 acts as the Nucleophile in catalysis. Residues Tyr214, Leu215, and Glu217 each contribute to the Ca(2+) site. The active-site Proton donor is Glu252. Substrate-binding residues include His326 and Asp327.

It belongs to the glycosyl hydrolase 13 family. TreS subfamily.

It catalyses the reaction D-maltose = alpha,alpha-trehalose. In terms of biological role, catalyzes the reversible interconversion of maltose and alpha,alpha-trehalose by transglucosylation. This is Trehalose synthase (treS) from Pimelobacter sp. (strain R48).